Here is a 494-residue protein sequence, read N- to C-terminus: Vacuolar-processing enzyme (494 aa).

The N-terminal stretch at 1–20 is a signal peptide; it reads MTRLASGVLITLLVALAGIA. Asn-151 carries an N-linked (GlcNAc...) asparagine glycan. His-178 is an active-site residue. Catalysis depends on Cys-220, which acts as the Nucleophile. A disulfide bridge links Cys-253 with Cys-267. N-linked (GlcNAc...) asparagine glycosylation is present at Asn-336. 2 disulfides stabilise this stretch: Cys-430/Cys-460 and Cys-442/Cys-477.

This sequence belongs to the peptidase C13 family. As to expression, high levels are seen in the flowers, a lower level expression is seen in the leaves, while very low levels are seen in the stems and roots.

In terms of biological role, asparagine-specific endopeptidase that may be involved in processing of proteins targeted to vacuoles that accumulate during ethylene-regulated processes such as flower opening and flavedo degreening. The polypeptide is Vacuolar-processing enzyme (Citrus sinensis (Sweet orange)).